A 310-amino-acid chain; its full sequence is 5'-adenylylsulfate reductase-like 4 (310 aa).

Residues 1-22 (MEKEILLLLLVIMFLTVADVDA) form the signal peptide. The region spanning 49-168 (GVESDERPRF…LVAFYSDVTG (120 aa)) is the Thioredoxin domain. 2 N-linked (GlcNAc...) asparagine glycosylation sites follow: Asn143 and Asn190. Residues 217–237 (LAIVFVLLRLLHLIYPTLVVF) form a helical membrane-spanning segment.

It localises to the membrane. In Arabidopsis thaliana (Mouse-ear cress), this protein is 5'-adenylylsulfate reductase-like 4 (APRL4).